Consider the following 190-residue polypeptide: Threonylcarbamoyl-AMP synthase (190 aa).

The 184-residue stretch at 7–190 (GDAIAAAIDV…ALTGELFRQG (184 aa)) folds into the YrdC-like domain.

This sequence belongs to the SUA5 family. TsaC subfamily.

The protein localises to the cytoplasm. It carries out the reaction L-threonine + hydrogencarbonate + ATP = L-threonylcarbamoyladenylate + diphosphate + H2O. In terms of biological role, required for the formation of a threonylcarbamoyl group on adenosine at position 37 (t(6)A37) in tRNAs that read codons beginning with adenine. Catalyzes the conversion of L-threonine, HCO(3)(-)/CO(2) and ATP to give threonylcarbamoyl-AMP (TC-AMP) as the acyladenylate intermediate, with the release of diphosphate. The polypeptide is Threonylcarbamoyl-AMP synthase (Shigella dysenteriae serotype 1 (strain Sd197)).